Consider the following 734-residue polypeptide: Photosystem I P700 chlorophyll a apoprotein A2 (734 aa).

8 consecutive transmembrane segments (helical) span residues 46 to 69 (IFASHFGQLAIIFLWTSGNLFHVA), 135 to 158 (LYTGALFLLFLSAISLIAGWLHLQ), 175 to 199 (LNHHLSGLFGVSSLAWTGHLVHVAI), 273 to 291 (IAHHHLAIAFIFLVAGHMY), 330 to 353 (LHFQLGLALASLGVITSLVAQHMY), 369 to 395 (AALYTHHQYIAGFIMTGAFAHGAIFFI), 417 to 439 (AIISHLSWASLFLGFHTLGLYVH), and 517 to 535 (FLVHHAIALGLHTTTLILV). [4Fe-4S] cluster is bound by residues cysteine 559 and cysteine 568. A run of 2 helical transmembrane segments spans residues 575–596 (AFYLAVFWMLNTIGWVTFYWHW) and 643–665 (LSVWAWMFLFGHLVWATGFMFLI). Residues histidine 654, methionine 662, and tyrosine 670 each coordinate chlorophyll a. Residue tryptophan 671 coordinates phylloquinone. Residues 707–727 (LVGLAHFSVGYIFTYAAFLIA) form a helical membrane-spanning segment.

Belongs to the PsaA/PsaB family. The PsaA/B heterodimer binds the P700 chlorophyll special pair and subsequent electron acceptors. PSI consists of a core antenna complex that captures photons, and an electron transfer chain that converts photonic excitation into a charge separation. The eukaryotic PSI reaction center is composed of at least 11 subunits. P700 is a chlorophyll a/chlorophyll a' dimer, A0 is one or more chlorophyll a, A1 is one or both phylloquinones and FX is a shared 4Fe-4S iron-sulfur center. serves as cofactor.

The protein localises to the plastid. The protein resides in the chloroplast thylakoid membrane. The enzyme catalyses reduced [plastocyanin] + hnu + oxidized [2Fe-2S]-[ferredoxin] = oxidized [plastocyanin] + reduced [2Fe-2S]-[ferredoxin]. Functionally, psaA and PsaB bind P700, the primary electron donor of photosystem I (PSI), as well as the electron acceptors A0, A1 and FX. PSI is a plastocyanin-ferredoxin oxidoreductase, converting photonic excitation into a charge separation, which transfers an electron from the donor P700 chlorophyll pair to the spectroscopically characterized acceptors A0, A1, FX, FA and FB in turn. Oxidized P700 is reduced on the lumenal side of the thylakoid membrane by plastocyanin. This Solanum bulbocastanum (Wild potato) protein is Photosystem I P700 chlorophyll a apoprotein A2.